Consider the following 312-residue polypeptide: Ribosomal RNA small subunit methyltransferase H (312 aa).

S-adenosyl-L-methionine contacts are provided by residues 34-36 (AGH), D54, F81, D102, and Q109.

Belongs to the methyltransferase superfamily. RsmH family.

The protein localises to the cytoplasm. The catalysed reaction is cytidine(1402) in 16S rRNA + S-adenosyl-L-methionine = N(4)-methylcytidine(1402) in 16S rRNA + S-adenosyl-L-homocysteine + H(+). Specifically methylates the N4 position of cytidine in position 1402 (C1402) of 16S rRNA. The sequence is that of Ribosomal RNA small subunit methyltransferase H from Geotalea daltonii (strain DSM 22248 / JCM 15807 / FRC-32) (Geobacter daltonii).